The sequence spans 148 residues: Deoxyuridine 5'-triphosphate nucleotidohydrolase (148 aa).

Substrate is bound by residues 68–70, Asn81, 85–87, and Lys95; these read RSG and TID.

This sequence belongs to the dUTPase family. It depends on Mg(2+) as a cofactor.

It catalyses the reaction dUTP + H2O = dUMP + diphosphate + H(+). It functions in the pathway pyrimidine metabolism; dUMP biosynthesis; dUMP from dCTP (dUTP route): step 2/2. This enzyme is involved in nucleotide metabolism: it produces dUMP, the immediate precursor of thymidine nucleotides and it decreases the intracellular concentration of dUTP so that uracil cannot be incorporated into DNA. The sequence is that of Deoxyuridine 5'-triphosphate nucleotidohydrolase from Rickettsia conorii (strain ATCC VR-613 / Malish 7).